A 270-amino-acid polypeptide reads, in one-letter code: Gap junction beta-3 protein (270 aa).

Over 1–20 (MDWKTLQALLSGVNKYSTAF) the chain is Cytoplasmic. The chain crosses the membrane as a helical span at residues 21 to 40 (GRIWLSVVFVFRVLVYVVAA). Residues 41–75 (ERVWGDEQKDFDCNTKQPGCTNVCYDNYFPISNIR) are Extracellular-facing. A helical membrane pass occupies residues 76–98 (LWALQLIFVTCPSLLVILHVAYR). Topologically, residues 99 to 126 (EERERRHRQKHGDQCAKLYDNAGKKHGG) are cytoplasmic. A helical transmembrane segment spans residues 127 to 149 (LWWTYLFSLIFKLIIEFLFLYLL). Topologically, residues 150 to 187 (HTLWHGFNMPRLVQCANVAPCPNIVDCYIARPTEKKIF) are extracellular. The chain crosses the membrane as a helical span at residues 188–210 (TYFMVGASAVCIVLTICELCYLI). The Cytoplasmic portion of the chain corresponds to 211-270 (CHRVLRGLHKDKPRGGCSPSSSASRASTCRCHHKLVEAGEVDPDPGNNKLQASAPNLTPI). Residues 250-270 (EVDPDPGNNKLQASAPNLTPI) form a disordered region. Over residues 258–270 (NKLQASAPNLTPI) the composition is skewed to polar residues.

The protein belongs to the connexin family. Beta-type (group I) subfamily. In terms of assembly, a connexon is composed of a hexamer of connexins. Interacts with CNST.

It is found in the cell membrane. Its subcellular location is the cell junction. It localises to the gap junction. In terms of biological role, one gap junction consists of a cluster of closely packed pairs of transmembrane channels, the connexons, through which materials of low MW diffuse from one cell to a neighboring cell. This is Gap junction beta-3 protein (GJB3) from Homo sapiens (Human).